The primary structure comprises 145 residues: D-aminoacyl-tRNA deacylase (145 aa).

The short motif at 137–138 (GP) is the Gly-cisPro motif, important for rejection of L-amino acids element.

It belongs to the DTD family. As to quaternary structure, homodimer.

Its subcellular location is the cytoplasm. It catalyses the reaction glycyl-tRNA(Ala) + H2O = tRNA(Ala) + glycine + H(+). The catalysed reaction is a D-aminoacyl-tRNA + H2O = a tRNA + a D-alpha-amino acid + H(+). In terms of biological role, an aminoacyl-tRNA editing enzyme that deacylates mischarged D-aminoacyl-tRNAs. Also deacylates mischarged glycyl-tRNA(Ala), protecting cells against glycine mischarging by AlaRS. Acts via tRNA-based rather than protein-based catalysis; rejects L-amino acids rather than detecting D-amino acids in the active site. By recycling D-aminoacyl-tRNA to D-amino acids and free tRNA molecules, this enzyme counteracts the toxicity associated with the formation of D-aminoacyl-tRNA entities in vivo and helps enforce protein L-homochirality. This Ectopseudomonas mendocina (strain ymp) (Pseudomonas mendocina) protein is D-aminoacyl-tRNA deacylase.